An 845-amino-acid polypeptide reads, in one-letter code: Extended synaptotagmin-2 (845 aa).

Residues M1–G17 show a composition bias toward gly residues. The interval M1–G26 is disordered. At M1–S27 the chain is on the cytoplasmic side. A helical transmembrane segment spans residues A28 to L48. Topologically, residues P49 to Y51 are lumenal. Residues A52 to W72 form a helical membrane-spanning segment. Over C73–T845 the chain is Cytoplasmic. The 180-residue stretch at D115–V294 folds into the SMP-LTD domain. 2 consecutive C2 domains span residues L293–F413 and V442–N563. Ca(2+) contacts are provided by K324, D325, D337, D384, E385, D386, D388, D390, and D391. Positions Q584–L664 are disordered. Positions S612 to S628 are enriched in polar residues. A phosphoserine mark is found at S615 and S617. Phosphothreonine is present on T629. The span at V634–Q645 shows a compositional bias: basic and acidic residues. A phosphoserine mark is found at S660, S662, S663, S667, S679, S682, and S685. One can recognise a C2 3 domain in the interval P710–Y832. Residues K757–K764 are required for phosphatidylinositol 4,5-bisphosphate-dependent location at the cell membrane.

The protein belongs to the extended synaptotagmin family. As to quaternary structure, homodimer. Interacts with ESYT1 and ESYT3. Interacts with FGFR1 that has been activated by FGF1 binding. Interacts with the AP-2 complex; identified in a complex with the AP-2 complex and FGFR1.

It is found in the cell membrane. The protein localises to the endoplasmic reticulum membrane. In terms of biological role, tethers the endoplasmic reticulum to the cell membrane and promotes the formation of appositions between the endoplasmic reticulum and the cell membrane. Binds glycerophospholipids in a barrel-like domain and may play a role in cellular lipid transport. Plays a role in FGF signaling via its role in the rapid internalization of FGFR1 that has been activated by FGF1 binding; this occurs most likely via the AP-2 complex. Promotes the localization of SACM1L at endoplasmic reticulum-plasma membrane contact sites (EPCS). The sequence is that of Extended synaptotagmin-2 (Esyt2) from Mus musculus (Mouse).